The sequence spans 421 residues: Ankyrin repeat domain-containing protein 61 (421 aa).

ANK repeat units lie at residues 27–57 (TLHS…NQPL), 74–103 (QPIF…DPEV), 107–146 (QGFT…NAVL), 166–195 (NKHS…QVNA), 199–228 (SSMT…NVNC), 233–272 (TGNT…QVNA), 276–305 (EGQT…NVNI), and 309–342 (NGES…PLRL).

The chain is Ankyrin repeat domain-containing protein 61 (Ankrd61) from Mus musculus (Mouse).